A 117-amino-acid chain; its full sequence is Glycine cleavage system H-like protein (117 aa).

One can recognise a Lipoyl-binding domain in the interval Ile21–Gln103. Lys62 bears the N6-lipoyllysine mark.

Belongs to the GcvH family. (R)-lipoate serves as cofactor.

The polypeptide is Glycine cleavage system H-like protein (Chlamydia trachomatis serovar L2 (strain ATCC VR-902B / DSM 19102 / 434/Bu)).